Here is a 209-residue protein sequence, read N- to C-terminus: Uracil phosphoribosyltransferase (209 aa).

5-phospho-alpha-D-ribose 1-diphosphate contacts are provided by residues arginine 79, arginine 104, and 131 to 139; that span reads DPMLATANS. Uracil is bound by residues isoleucine 194 and 199–201; that span reads GDA. 5-phospho-alpha-D-ribose 1-diphosphate is bound at residue aspartate 200.

This sequence belongs to the UPRTase family. The cofactor is Mg(2+).

The catalysed reaction is UMP + diphosphate = 5-phospho-alpha-D-ribose 1-diphosphate + uracil. It functions in the pathway pyrimidine metabolism; UMP biosynthesis via salvage pathway; UMP from uracil: step 1/1. Allosterically activated by GTP. Functionally, catalyzes the conversion of uracil and 5-phospho-alpha-D-ribose 1-diphosphate (PRPP) to UMP and diphosphate. The protein is Uracil phosphoribosyltransferase of Mesorhizobium japonicum (strain LMG 29417 / CECT 9101 / MAFF 303099) (Mesorhizobium loti (strain MAFF 303099)).